The following is a 120-amino-acid chain: Small ribosomal subunit protein uS17m (120 aa).

A mitochondrion-targeting transit peptide spans 1–20 (MSIVRSSVHAKWVVGKVIGT).

This sequence belongs to the universal ribosomal protein uS17 family. Component of the mitochondrial ribosome small subunit (28S) which comprises a 12S rRNA and about 30 distinct proteins.

The protein resides in the mitochondrion. This chain is Small ribosomal subunit protein uS17m (Mrps17), found in Mus musculus (Mouse).